The primary structure comprises 304 residues: Phosphate transport system permease protein PstA 1 (304 aa).

6 helical membrane passes run F36–I56, A96–E116, V132–T152, F155–V175, I204–I224, and W276–I296. The region spanning L89–R297 is the ABC transmembrane type-1 domain.

This sequence belongs to the binding-protein-dependent transport system permease family. CysTW subfamily.

It is found in the cell membrane. Part of the binding-protein-dependent transport system for phosphate; probably responsible for the translocation of the substrate across the membrane. The sequence is that of Phosphate transport system permease protein PstA 1 (pstA1) from Mycobacterium tuberculosis (strain CDC 1551 / Oshkosh).